Consider the following 394-residue polypeptide: Elongation factor Tu (394 aa).

Residues 10-204 form the tr-type G domain; it reads KPHVNVGTIG…AMDDYIPAPE (195 aa). Residues 19-26 are G1; the sequence is GHVDHGKT. 19 to 26 provides a ligand contact to GTP; sequence GHVDHGKT. Mg(2+) is bound at residue Thr-26. The tract at residues 60 to 64 is G2; it reads GITIN. The G3 stretch occupies residues 81-84; that stretch reads DCPG. Residues 81-85 and 136-139 each bind GTP; these read DCPGH and NKCD. The interval 136–139 is G4; that stretch reads NKCD. Residues 174 to 176 form a G5 region; the sequence is SAL.

This sequence belongs to the TRAFAC class translation factor GTPase superfamily. Classic translation factor GTPase family. EF-Tu/EF-1A subfamily. In terms of assembly, monomer.

Its subcellular location is the cytoplasm. It catalyses the reaction GTP + H2O = GDP + phosphate + H(+). Functionally, GTP hydrolase that promotes the GTP-dependent binding of aminoacyl-tRNA to the A-site of ribosomes during protein biosynthesis. This Francisella tularensis subsp. holarctica (strain FTNF002-00 / FTA) protein is Elongation factor Tu.